Reading from the N-terminus, the 2922-residue chain is Small ribosomal subunit protein uS4c (2922 aa).

The S4 RNA-binding domain occupies 111–174; the sequence is MRLDNIVFRL…ISMELVSRFL (64 aa).

This sequence belongs to the universal ribosomal protein uS4 family. As to quaternary structure, part of the 30S ribosomal subunit. Contacts protein S5. The interaction surface between S4 and S5 is involved in control of translational fidelity.

It is found in the plastid. The protein localises to the chloroplast. In terms of biological role, one of the primary rRNA binding proteins, it binds directly to 16S rRNA where it nucleates assembly of the body of the 30S subunit. Functionally, with S5 and S12 plays an important role in translational accuracy. This chain is Small ribosomal subunit protein uS4c (rps4), found in Stigeoclonium helveticum (Green alga).